Here is a 299-residue protein sequence, read N- to C-terminus: Regucalcin (299 aa).

Glu-18 provides a ligand contact to a divalent metal cation. Substrate is bound by residues Arg-101, Asn-103, and Glu-121. Positions 154 and 204 each coordinate a divalent metal cation. The active-site Proton donor/acceptor is Asp-204.

The protein belongs to the SMP-30/CGR1 family. Zn(2+) is required as a cofactor. Requires Mn(2+) as cofactor. The cofactor is Ca(2+). It depends on Mg(2+) as a cofactor.

It localises to the cytoplasm. It carries out the reaction D-glucono-1,5-lactone + H2O = D-gluconate + H(+). The protein operates within cofactor biosynthesis; L-ascorbate biosynthesis via UDP-alpha-D-glucuronate pathway; L-ascorbate from UDP-alpha-D-glucuronate: step 3/4. In terms of biological role, gluconolactonase with low activity towards other sugar lactones, including gulonolactone and galactonolactone. Catalyzes a key step in ascorbic acid (vitamin C) biosynthesis. Can also hydrolyze diisopropyl phosphorofluoridate and phenylacetate (in vitro). Calcium-binding protein. Modulates Ca(2+) signaling, and Ca(2+)-dependent cellular processes and enzyme activities. The sequence is that of Regucalcin from Gallus gallus (Chicken).